The sequence spans 333 residues: MAELFYDDDADLSIIQGRKVAVLGYGSQGHAHALSLRDSGVDVRVGLHEGSKSKAKAEEQGLRVVTPSEAAAEADVIMILVPDPIQAQVYEESVKDNLKDGDALFFGHGLNIRFGFIKPPAGVDVCMVAPKGPGHLVRRQYEEGRGVPCIVAVEQDASGKGLELALSYAKGIGGTRAGVIKTTFTEETETDLFGEQAVLCGGTAALVKAGFETLTEAGYQPEIAYFECLHELKLIVDLMYEGGLEKMRWSISETAEWGDYVTGPRIITDATKAEMKKVLAEIQDGTFAKNWMAEYHNGLPKYNEYKKADSDHLLETTGRELRKLMSWVNDEEA.

The region spanning Ala-2 to Thr-182 is the KARI N-terminal Rossmann domain. NADP(+) is bound by residues Tyr-25 to Gln-28, Ser-51, Ser-53, and Asp-83 to Gln-86. Residue His-108 is part of the active site. Gly-134 is a binding site for NADP(+). The 146-residue stretch at Thr-183–Val-328 folds into the KARI C-terminal knotted domain. Mg(2+)-binding residues include Asp-191, Glu-195, Glu-227, and Glu-231. Substrate is bound at residue Ser-252.

The protein belongs to the ketol-acid reductoisomerase family. Mg(2+) serves as cofactor.

It carries out the reaction (2R)-2,3-dihydroxy-3-methylbutanoate + NADP(+) = (2S)-2-acetolactate + NADPH + H(+). The catalysed reaction is (2R,3R)-2,3-dihydroxy-3-methylpentanoate + NADP(+) = (S)-2-ethyl-2-hydroxy-3-oxobutanoate + NADPH + H(+). It functions in the pathway amino-acid biosynthesis; L-isoleucine biosynthesis; L-isoleucine from 2-oxobutanoate: step 2/4. It participates in amino-acid biosynthesis; L-valine biosynthesis; L-valine from pyruvate: step 2/4. In terms of biological role, involved in the biosynthesis of branched-chain amino acids (BCAA). Catalyzes an alkyl-migration followed by a ketol-acid reduction of (S)-2-acetolactate (S2AL) to yield (R)-2,3-dihydroxy-isovalerate. In the isomerase reaction, S2AL is rearranged via a Mg-dependent methyl migration to produce 3-hydroxy-3-methyl-2-ketobutyrate (HMKB). In the reductase reaction, this 2-ketoacid undergoes a metal-dependent reduction by NADPH to yield (R)-2,3-dihydroxy-isovalerate. The sequence is that of Ketol-acid reductoisomerase (NADP(+)) from Streptomyces griseus subsp. griseus (strain JCM 4626 / CBS 651.72 / NBRC 13350 / KCC S-0626 / ISP 5235).